The following is a 462-amino-acid chain: MNENEGISLGELETRPFSEGITRFTKEQAAYYAEQKEKDRIKALKIPYEDSKVREYLRRYGEPITYFGEDALARRQRLQQLMIEKSLEGDNPLDVDQGASENIEKETYVQGSHELLVARKKIALYSLEKAKLRLKKEREISEIPVPEIVLSGKSSIEHLQKAELMGSQIGGERPIAIVRFSNNGNHFASGSWGGQVKVWNSDNLSEVQLFRGHTDRVSGLDWYPLCQAWDADSEQLTLATGAADNTVCLWKASQSTPLLRLEGHLARVGRVAFHPSGDYLVSASFDTTWRLWDVHTGVELLMQEGHSEGIFSIACQPDGSLVSSGGNDAIGRIWDLRSGKSIMVLDEHIRQIVAMAWSPNGYQLATSSADDTVKIWDLRKVSLAHTIPAHSSLVSDVRYIESGVNRFIATSGYDGCVKLWNPLNCSLIKSMVGHEEKVMSVDGYGDRFISSGYDRTIKLWYP.

7 WD repeats span residues 170-209 (GGER…EVQL), 212-260 (GHTD…PLLR), 263-302 (GHLA…ELLM), 305-344 (GHSE…SIMV), 347-386 (EHIR…LAHT), 389-430 (AHSS…LIKS), and 433-462 (GHEE…LWYP).

It is found in the cytoplasm. This is an uncharacterized protein from Schizosaccharomyces pombe (strain 972 / ATCC 24843) (Fission yeast).